We begin with the raw amino-acid sequence, 429 residues long: 3-phosphoshikimate 1-carboxyvinyltransferase (429 aa).

3-phosphoshikimate is bound by residues Lys-21, Ser-22, and Arg-26. Lys-21 provides a ligand contact to phosphoenolpyruvate. Positions 94 and 122 each coordinate phosphoenolpyruvate. 4 residues coordinate 3-phosphoshikimate: Ser-167, Gln-169, Asp-315, and Lys-342. Gln-169 contacts phosphoenolpyruvate. Asp-315 serves as the catalytic Proton acceptor. Arg-346 and Arg-388 together coordinate phosphoenolpyruvate.

The protein belongs to the EPSP synthase family. In terms of assembly, monomer.

The protein localises to the cytoplasm. It catalyses the reaction 3-phosphoshikimate + phosphoenolpyruvate = 5-O-(1-carboxyvinyl)-3-phosphoshikimate + phosphate. It participates in metabolic intermediate biosynthesis; chorismate biosynthesis; chorismate from D-erythrose 4-phosphate and phosphoenolpyruvate: step 6/7. Catalyzes the transfer of the enolpyruvyl moiety of phosphoenolpyruvate (PEP) to the 5-hydroxyl of shikimate-3-phosphate (S3P) to produce enolpyruvyl shikimate-3-phosphate and inorganic phosphate. The polypeptide is 3-phosphoshikimate 1-carboxyvinyltransferase (Desulforamulus reducens (strain ATCC BAA-1160 / DSM 100696 / MI-1) (Desulfotomaculum reducens)).